The sequence spans 77 residues: Large ribosomal subunit protein eL14 (77 aa).

Belongs to the eukaryotic ribosomal protein eL14 family.

The sequence is that of Large ribosomal subunit protein eL14 from Methanococcus vannielii (strain ATCC 35089 / DSM 1224 / JCM 13029 / OCM 148 / SB).